A 1656-amino-acid chain; its full sequence is Probable phospholipid-transporting ATPase DNF3 (1656 aa).

Topologically, residues 1–164 (MGIADGQRRR…PRQLYAQFSK (164 aa)) are lumenal. Residues 36–74 (ELEDINESKTFSGSDNNDKDDRDETSGNYAAEEDYEMEE) form a disordered region. Residues 51 to 60 (NNDKDDRDET) show a composition bias toward basic and acidic residues. The chain crosses the membrane as a helical span at residues 165–185 (LANTYFFIVAVLQMIPGWSTT). At 186–451 (GTYTTIIPLC…RTKAPKLQRK (266 aa)) the chain is on the cytoplasmic side. A helical transmembrane segment spans residues 452-472 (INMIIVFMVFVVATISLFSYL). At 473–495 (GHVLHKKKYIDQNKAWYLFQADA) the chain is on the lumenal side. Residues 496 to 516 (GVAPTIMSFIIMYNTVIPLSL) form a helical membrane-spanning segment. The Cytoplasmic portion of the chain corresponds to 517-1157 (YVTMEIIKVV…ISKMNAVSQE (641 aa)). Residue D566 is the 4-aspartylphosphate intermediate of the active site. ATP is bound by residues D566, K567, and T568. D566 is a Mg(2+) binding site. T568 contributes to the Mg(2+) binding site. S627 is modified (phosphoserine). Residues E765, F813, S815, K818, K838, R1034, T1035, T1114, G1115, D1116, 1167-1174 (VVVIDGAT), R1202, and K1208 contribute to the ATP site. Residues 1158–1178 (VDSGNIAHCVVVIDGATMAMF) traverse the membrane as a helical segment. Residues 1179-1318 (EGNPTYMSVF…MFSGSSLYEP (140 aa)) lie on the Lumenal side of the membrane. Position 1229 (D1229) interacts with Mg(2+). Residues N1232 and D1233 each coordinate ATP. Residues 1319 to 1339 (WSLSMFNTLFTSLPVLCIGMF) form a helical membrane-spanning segment. The Cytoplasmic segment spans residues 1340 to 1365 (EKDLKPMTLLTVPELYSYGRLSQGFN). A helical membrane pass occupies residues 1366-1386 (WLIFMEWVILATTNSLIITFL). At 1387 to 1395 (NVVMWGMSS) the chain is on the lumenal side. The helical transmembrane segment at 1396 to 1416 (LSDNTMYPLGLINFTAIVALI) threads the bilayer. Residues 1417–1432 (NVKSQFVEMHNRNWLA) are Cytoplasmic-facing. The chain crosses the membrane as a helical span at residues 1433–1453 (FTSVVLSCGGWLVWCCALPIL). The Lumenal segment spans residues 1454–1473 (NNTDQIYDVAYGFYNHFGKD). The helical transmembrane segment at 1474–1494 (ITFWCTSLVLALLPITLDIVY) threads the bilayer. Residues 1495–1656 (KTFKVMIWPS…IIQARLKDLE (162 aa)) are Cytoplasmic-facing. The disordered stretch occupies residues 1554–1576 (PRTNSRASAKTHNSSIYSMSNGN).

The protein belongs to the cation transport ATPase (P-type) (TC 3.A.3) family. Type IV subfamily. In terms of assembly, component of a flippase complex consisting of DNF3 and YNR048W/CRF1. Interacts with YNR048W/CRF1; the interaction is direct and required for proper expression and endoplasmic reticulum (ER) export of either partner. The cofactor is Mg(2+).

It is found in the golgi apparatus. It localises to the trans-Golgi network membrane. The protein resides in the endosome membrane. The enzyme catalyses ATP + H2O + phospholipidSide 1 = ADP + phosphate + phospholipidSide 2.. The catalysed reaction is a 1,2-diacyl-sn-glycero-3-phosphocholine(out) + ATP + H2O = a 1,2-diacyl-sn-glycero-3-phosphocholine(in) + ADP + phosphate + H(+). It catalyses the reaction a 1,2-diacyl-sn-glycero-3-phosphoethanolamine(out) + ATP + H2O = a 1,2-diacyl-sn-glycero-3-phosphoethanolamine(in) + ADP + phosphate + H(+). Catalytic component of a P4-ATPase flippase complex which catalyzes the hydrolysis of ATP coupled to the transport of phosphatidylcholine and small amounts of phosphatidylethanolamine from the lumen to the cytosolic leaflet of the trans-Golgi network and ensures the maintenance of asymmetric distribution of phospholipids. May be involved in transport from early endosomes to the trans-Golgi network (TGN). In Saccharomyces cerevisiae (strain ATCC 204508 / S288c) (Baker's yeast), this protein is Probable phospholipid-transporting ATPase DNF3 (DNF3).